Consider the following 238-residue polypeptide: MLFPTPLISGRLERRYKRFLADVTLDDGRFITASVPNTGSMLGLTAPGSRVWLSFSDAPHRKYAHTLQIVEADNTLVGVNTGLPNRIAEEAILKGLIPDLDGYATLKREQKYGRNSRIDLLLDDGPRPRAYVEVKNVHFIRTPGLAEFPDTVTARGAKHLDELVDVVAAGHRGIMLFITQRADCSRFGISGDLDPFYARAFERAIASGVEAWAVRCHITENGIDATELVPIEDMRRIE.

This sequence belongs to the SfsA family.

The protein is Sugar fermentation stimulation protein homolog of Brucella melitensis biotype 1 (strain ATCC 23456 / CCUG 17765 / NCTC 10094 / 16M).